A 995-amino-acid polypeptide reads, in one-letter code: DExH-box ATP-dependent RNA helicase DExH10 (995 aa).

The disordered stretch occupies residues 1 to 42 (MSAQMEEPETLGKRKESESSKLRSDETPTPEPRTKRRSLKRA). An N-acetylserine modification is found at S2. Over residues 10–26 (TLGKRKESESSKLRSDE) the composition is skewed to basic and acidic residues. The Helicase ATP-binding domain maps to 90-246 (VACLERKESI…WICYLHKQPC (157 aa)). 103–110 (AHTSAGKT) is an ATP binding site. The DEIH box motif lies at 194–197 (DEIH). The disordered stretch occupies residues 290–318 (DTFPKPKSNDGKKSANGKSGGRGAKGGGG). A compositionally biased stretch (gly residues) spans 307–318 (KSGGRGAKGGGG). In terms of domain architecture, Helicase C-terminal spans 323-524 (DVYKIVKMIM…LSYYTILNLL (202 aa)).

The protein belongs to the DExH box helicase family. SKI2 subfamily. In terms of tissue distribution, expressed in inflorescences, leaves, stems, and roots.

It localises to the nucleus. The protein localises to the nucleoplasm. The catalysed reaction is ATP + H2O = ADP + phosphate + H(+). Its function is as follows. ATP-dependent RNA helicase that associates with the RNA exosome complex, with the cap binding complex (CBC) and with the NEXT-like complex. Involved in the degradation of a large number of non-coding nuclear exosome substrates such as snoRNA and miRNA precursors, incompletely spliced mRNAs, and spurious transcripts produced from pseudogenes and intergenic regions. Involved in the maintenance of homeotic B and C gene expression in the reproductive whorls. Regulates floral organ spacing and identity, probably through the regulation of protein synthesis or mRNA degradation. This is DExH-box ATP-dependent RNA helicase DExH10 from Arabidopsis thaliana (Mouse-ear cress).